The following is a 1234-amino-acid chain: Protein Jumonji (1234 aa).

Basic residues predominate over residues 1–11 (MSKERPKRNII). Disordered regions lie at residues 1–22 (MSKERPKRNIIQKKYDDSDGIP), 68–150 (AKAL…LSKR), 169–339 (LPNS…VKYT), and 354–548 (RELV…GKSG). Ser-78 is modified (phosphoserine). Low complexity predominate over residues 86–98 (SQVSSTSNDVSSS). The short motif at 104–110 (PSRKRPR) is the Nuclear localization signal element. Over residues 117–129 (FAQSQPNSPSTTP) the composition is skewed to polar residues. The sufficient for interaction with the PRC2 complex stretch occupies residues 141-170 (ATQISDLSKRKPKTEDFLTFLCLRGSPALP). The span at 180–193 (QDEEDVEEEDDETE) shows a compositional bias: acidic residues. Over residues 197 to 210 (ATTNNASSSCQSTP) the composition is skewed to polar residues. The span at 211–221 (RKGKTHKHVHN) shows a compositional bias: basic residues. Positions 244 to 264 (KEATPGKEKHSEPRADSRREQ) are enriched in basic and acidic residues. The segment covering 265–285 (ASGAQPTAASAAASSAKGLAA) has biased composition (low complexity). 2 stretches are compositionally biased toward polar residues: residues 304 to 322 (SKVNGVTRMSSLGAGTNSA) and 369 to 384 (SAVNHTISGKTESSNA). Lys-378 carries the N6-acetyllysine modification. A compositionally biased stretch (basic and acidic residues) spans 418 to 440 (CTKEVGGRQLREGLRNSKRRLEE). Ser-449 carries the phosphoserine modification. 2 stretches are compositionally biased toward basic and acidic residues: residues 482 to 494 (VKKEVPERSLERN) and 529 to 544 (SSHKPHDPQGKPEKGS). Residues 555–596 (IPVLRPSAKEFHDPLIYIESVRAQVEKYGMCRVIPPPDWRPE) enclose the JmjN domain. The 93-residue stretch at 619-711 (WGPNVQRLAC…YLLSYDSLSP (93 aa)) folds into the ARID domain. A GSGFP motif motif is present at residues 872–876 (GSGFP). A JmjC domain is found at 882–1046 (PFSRHGWNLT…MGFETAKEMK (165 aa)). The interval 1206-1234 (ENCLNKPTPKRGPRKRATVDVPPSRLPSS) is disordered.

The protein belongs to the JARID2 family. As to quaternary structure, associates with the PRC2 complex, which consists of the core components EED, EZH1 or EZH2, SUZ12, and RBBP4, and various combinations of accessory subunits including AEBP2, JARID2, PHF19, MTF2 and EPOP. Found in a monomeric PRC2.2 (class 2) complex consisting of at least SUZ12, RBBP4, AEBP2 and JARID2. Facilitates nucleosome binding of the PRC2 complex. Interacts with SUZ12 (via C2H2-type zinc finger domain); the interaction is direct; competes with EPOP for SUZ12 binding. Interacts with histone methyltransferases EHMT1/GLP1 and EHMT2/G9a. Interacts with GATA4 (via the N-terminal region). Interacts with NKX2-5 (via the C-terminal region). Interacts with RB1. Interacts with ZNF496. Interacts with ESRRB. Interacts with DDX18; this interaction inhibits the PRC2 complex. In terms of tissue distribution, widely expressed in embryos. In adults, expressed at high levels in heart, skeletal muscle, brain and thymus.

The protein resides in the nucleus. Its function is as follows. Regulator of histone methyltransferase complexes that plays an essential role in embryonic development, including heart and liver development, neural tube fusion process and hematopoiesis. Acts as an accessory subunit for the core PRC2 (Polycomb repressive complex 2) complex, which mediates histone H3K27 (H3K27me3) trimethylation on chromatin. Binds DNA and mediates the recruitment of the PRC2 complex to target genes in embryonic stem cells, thereby playing a key role in stem cell differentiation and normal embryonic development. In cardiac cells, it is required to repress expression of cyclin-D1 (CCND1) by activating methylation of 'Lys-9' of histone H3 (H3K9me) by the GLP1/EHMT1 and G9a/EHMT2 histone methyltransferases. Also acts as a transcriptional repressor of ANF via its interaction with GATA4 and NKX2-5. Participates in the negative regulation of cell proliferation signaling. Does not have histone demethylase activity. The chain is Protein Jumonji (Jarid2) from Mus musculus (Mouse).